The chain runs to 149 residues: Transcriptional repressor NrdR (149 aa).

A zinc finger lies at 3 to 34 (CPFCGANDTKVIDSRLVADGHQVRRRRQCLAC). One can recognise an ATP-cone domain in the interval 49 to 139 (PRVIKTDGNR…VYRSFEDIRE (91 aa)).

This sequence belongs to the NrdR family. It depends on Zn(2+) as a cofactor.

Its function is as follows. Negatively regulates transcription of bacterial ribonucleotide reductase nrd genes and operons by binding to NrdR-boxes. In Photobacterium profundum (strain SS9), this protein is Transcriptional repressor NrdR.